The primary structure comprises 385 residues: Centrosomal protein of 44 kDa (385 aa).

The tract at residues 11-191 is binds with microtubules and centrioles; that stretch reads RKLEQRLRTL…TKCYKSALLE (181 aa). Residues 194-204 are compositionally biased toward acidic residues; that stretch reads EEEEPTSDCEE. Residues 194–224 form a disordered region; the sequence is EEEEPTSDCEEDSHLQREMGSPFETAEETPN. Coiled-coil stretches lie at residues 224 to 263 and 353 to 379; these read NSEQ…KGKI and TEES…ELLK.

In terms of assembly, binds to centriolar microtubules.

Its subcellular location is the cytoplasm. The protein resides in the cytoskeleton. The protein localises to the microtubule organizing center. It is found in the centrosome. It localises to the centriole. Its subcellular location is the spindle pole. The protein resides in the midbody. In terms of biological role, centriole-enriched microtubule-binding protein involved in centriole biogenesis. In collaboration with CEP295 and POC1B, is required for the centriole-to-centrosome conversion by ensuring the formation of bona fide centriole wall. Functions as a linker component that maintains centrosome cohesion. Associates with CROCC and regulates its stability and localization to the centrosome. The chain is Centrosomal protein of 44 kDa (cep44) from Xenopus tropicalis (Western clawed frog).